Consider the following 213-residue polypeptide: Receptor-binding cancer antigen expressed on SiSo cells (213 aa).

At M1–F6 the chain is on the extracellular side. Residues R7–C27 traverse the membrane as a helical; Signal-anchor for type III membrane protein segment. Residues R28–S213 lie on the Cytoplasmic side of the membrane. S36 is subject to Phosphoserine. The residue at position 41 (T41) is a Phosphothreonine. Y94 carries the post-translational modification Phosphotyrosine. Residues Q168–G209 are a coiled coil. The segment covering A179–N206 has biased composition (basic and acidic residues). Positions A179 to S213 are disordered.

In terms of assembly, homodimer.

It localises to the golgi apparatus membrane. Functionally, may participate in suppression of cell proliferation and induces apoptotic cell death through activation of interleukin-1-beta converting enzyme (ICE)-like proteases. This is Receptor-binding cancer antigen expressed on SiSo cells (Ebag9) from Rattus norvegicus (Rat).